The sequence spans 1184 residues: Protein stu1 (1184 aa).

HEAT repeat units follow at residues 92-130 and 162-194; these read FCPV…EHYV and RSYV…FQGA. 2 stretches are compositionally biased toward basic and acidic residues: residues 229–240 and 308–317; these read SSTARPRSRVEP and EAEKAPHMET. A disordered region spans residues 229–336; the sequence is SSTARPRSRV…APQPLHAETS (108 aa). Residues 463-499 form an HEAT 3 repeat; that stretch reads VTYTPRLLQHVTSACQDKNAQLRLFAAGWLKTLLNKQ. Disordered stretches follow at residues 564-584 and 602-906; these read LEKD…SDTL and ARLA…RVEE. Positions 572–584 are enriched in polar residues; it reads NRDQSSYLSSDTL. The span at 640-649 shows a compositional bias: low complexity; sequence APLSSLSSAP. Residues 723–737 show a composition bias toward polar residues; it reads SASNENETQVATQVA. Composition is skewed to basic and acidic residues over residues 787-811 and 882-895; these read AGRH…ENKL and EQDR…DSAE.

The protein belongs to the CLASP family. As to quaternary structure, interacts with microtubules.

It is found in the cytoplasm. The protein localises to the cytoskeleton. Its subcellular location is the nucleus. The protein resides in the spindle. Its function is as follows. Microtubule binding protein that promotes the stabilization of dynamic microtubules. Required for mitotic spindle formation. The polypeptide is Protein stu1 (stu1) (Aspergillus oryzae (strain ATCC 42149 / RIB 40) (Yellow koji mold)).